A 153-amino-acid polypeptide reads, in one-letter code: Ribosome maturation factor RimP (153 aa).

Belongs to the RimP family.

The protein resides in the cytoplasm. Functionally, required for maturation of 30S ribosomal subunits. The polypeptide is Ribosome maturation factor RimP (Rippkaea orientalis (strain PCC 8801 / RF-1) (Cyanothece sp. (strain PCC 8801))).